Consider the following 310-residue polypeptide: MRRHLSLFLGSLVIGLALLIAPAASWAYPFWAQQNYDSPREATGKIVCANCHLAKKLTQAEVPQSVLPDSVFTASVRVPYENGLQEIGADGSDVGLQVGAVVMLPDGFTLAPQDRWTDEIKEETEGVYFTQYSDEQPNILLVGPIPGDEHQEIVFPVLSPDPATDSNIHFGKYQIHVGGNRGRGQVYPTGDKSNNTIYTAPASGTIASIEPGDNGASVVSIKAADGSSVSETIPVGPEVLVSVGDSIEAGTALTNDPNVGGFGQVDAEIVLQNPVRIYGLLAFFAAVALAQIMLVLKKRQIEKVQAAEGV.

Positions 1 to 27 are cleaved as a signal peptide; that stretch reads MRRHLSLFLGSLVIGLALLIAPAASWA. Positions 28, 48, 51, and 52 each coordinate heme. A helical transmembrane segment spans residues 277 to 297; sequence IYGLLAFFAAVALAQIMLVLK.

This sequence belongs to the cytochrome f family. In terms of assembly, the 4 large subunits of the cytochrome b6-f complex are cytochrome b6, subunit IV (17 kDa polypeptide, PetD), cytochrome f and the Rieske protein, while the 4 small subunits are PetG, PetL, PetM and PetN. The complex functions as a dimer. The cofactor is heme.

It is found in the cellular thylakoid membrane. Component of the cytochrome b6-f complex, which mediates electron transfer between photosystem II (PSII) and photosystem I (PSI), cyclic electron flow around PSI, and state transitions. The sequence is that of Cytochrome f from Synechococcus sp. (strain CC9605).